The primary structure comprises 215 residues: dITP/XTP pyrophosphatase (215 aa).

Thr13–Lys18 serves as a coordination point for substrate. Asp74 (proton acceptor) is an active-site residue. Residue Asp74 coordinates Mg(2+). Residues Ser75, Phe163 to Asp166, Lys186, and His199 to Arg200 each bind substrate.

This sequence belongs to the HAM1 NTPase family. Homodimer. Requires Mg(2+) as cofactor.

The enzyme catalyses XTP + H2O = XMP + diphosphate + H(+). It catalyses the reaction dITP + H2O = dIMP + diphosphate + H(+). It carries out the reaction ITP + H2O = IMP + diphosphate + H(+). Functionally, pyrophosphatase that catalyzes the hydrolysis of nucleoside triphosphates to their monophosphate derivatives, with a high preference for the non-canonical purine nucleotides XTP (xanthosine triphosphate), dITP (deoxyinosine triphosphate) and ITP. Seems to function as a house-cleaning enzyme that removes non-canonical purine nucleotides from the nucleotide pool, thus preventing their incorporation into DNA/RNA and avoiding chromosomal lesions. The chain is dITP/XTP pyrophosphatase from Bartonella quintana (strain Toulouse) (Rochalimaea quintana).